Here is a 907-residue protein sequence, read N- to C-terminus: Potassium channel AKT3 (907 aa).

At methionine 1–asparagine 75 the chain is on the cytoplasmic side. A helical membrane pass occupies residues tyrosine 76 to proline 96. The Extracellular portion of the chain corresponds to glutamate 97–leucine 102. A helical transmembrane segment spans residues alanine 103 to valine 123. Residues alanine 124–threonine 146 lie on the Cytoplasmic side of the membrane. The helical transmembrane segment at threonine 147 to proline 167 threads the bilayer. Topologically, residues proline 168 to glycine 174 are extracellular. The chain crosses the membrane as a helical; Voltage-sensor span at residues phenylalanine 175–glutamate 195. The Cytoplasmic portion of the chain corresponds to lysine 196 to lysine 209. The helical transmembrane segment at leucine 210–aspartate 230 threads the bilayer. Residues arginine 231–valine 257 are Extracellular-facing. The pore-forming intramembrane region spans alanine 258–alanine 277. Over glutamate 278 to threonine 288 the chain is Extracellular. A helical membrane pass occupies residues tyrosine 289–valine 309. Residues histidine 310–glutamine 907 are Cytoplasmic-facing. A nucleoside 3',5'-cyclic phosphate is bound at residue leucine 388 to tyrosine 512. 5 ANK repeats span residues aspartate 539 to glutamate 568, tyrosine 572 to serine 601, glutamate 605 to glycine 634, aspartate 636 to glycine 665, and aspartate 670 to alanine 699. Disordered regions lie at residues alanine 726–arginine 779 and glycine 801–proline 824. Residues serine 754–threonine 776 show a composition bias toward low complexity. Residues tyrosine 803–alanine 812 show a composition bias toward gly residues. The KHA domain occupies arginine 827–glutamine 907.

Belongs to the potassium channel family. Plant (TC 1.A.1.4) subfamily.

The protein localises to the membrane. Probable inward-rectifying potassium channel. Assuming opened or closed conformations in response to the voltage difference across the membrane, the channel is activated by hyperpolarization. The chain is Potassium channel AKT3 from Oryza sativa subsp. japonica (Rice).